A 186-amino-acid chain; its full sequence is Large ribosomal subunit protein uL5 (186 aa).

It belongs to the universal ribosomal protein uL5 family. As to quaternary structure, part of the 50S ribosomal subunit; part of the 5S rRNA/L5/L18/L25 subcomplex. Contacts the 5S rRNA and the P site tRNA. Forms a bridge to the 30S subunit in the 70S ribosome.

In terms of biological role, this is one of the proteins that bind and probably mediate the attachment of the 5S RNA into the large ribosomal subunit, where it forms part of the central protuberance. In the 70S ribosome it contacts protein S13 of the 30S subunit (bridge B1b), connecting the 2 subunits; this bridge is implicated in subunit movement. Contacts the P site tRNA; the 5S rRNA and some of its associated proteins might help stabilize positioning of ribosome-bound tRNAs. The protein is Large ribosomal subunit protein uL5 of Ruegeria pomeroyi (strain ATCC 700808 / DSM 15171 / DSS-3) (Silicibacter pomeroyi).